Consider the following 777-residue polypeptide: Shutoff protein (777 aa).

Disordered regions lie at residues 1–55 (MEED…SVPV) and 261–283 (PLDSDQPEQNSEDGQPVVSDDDL). A compositionally biased stretch (polar residues) spans 9 to 20 (QPDSETLTSPTS). The segment at 250–314 (VMDHLLIKRV…VILVTVELEC (65 aa)) is binding to host EIF4G. The RRM domain occupies 317–435 (RFFANPQTLR…ELWTAFSERT (119 aa)). Tyrosine 334 and tyrosine 649 each carry phosphotyrosine; by host. Residues 652-777 (PQTGEELNTP…AAARLVESQP (126 aa)) are disordered. Positions 656 to 665 (EELNTPSPSA) are enriched in polar residues. Positions 728-738 (GAGGQTPQGRG) are enriched in gly residues. A compositionally biased stretch (basic and acidic residues) spans 753–763 (TRSEPASDGES).

It belongs to the adenoviridae shutoff protein family. Monomer. Interacts with hexon protein; this interaction allows chaperoning and trimerization of hexon proteins. Interacts (via N-terminus) with host initiation factor EIF4G (via C-terminus). Interacts (via RRM domain) with viral mRNAs that contain the tripartite leader; this interaction allows ribosome shunting and expression of viral late mRNAs. Might be cleaved by the viral protease. Post-translationally, phosphorylated. Tyrosine phosphorylation enhances preferential binding to tripartite leader mRNAs and allows ribosome shunting. In terms of processing, methylated. Asymmetric dimethylation by host PRMT1 of the Arg/Gly-rich region may regulate shutoff protein binding to hexon and promote the capsid assembly in the nucleus.

The protein localises to the host cytoplasm. In terms of biological role, protein that inhibits host translation while promoting late viral translation by ribosome shunting. Blocks host cap-dependent translation by binding to eIF4G, displacing MKNK1 from cap initiation complexes and preventing EIF4E phosphorylation. Binds to the tripartite leader sequence of viral late mRNAs and recruits host eIF4G, PABPC1/poly-A binding protein and 40S ribosomes subunits on viral mRNAs, allowing ribosome shunting and efficient translation of late viral mRNAs even though conventional translation via ribosome scanning from the cap has been shut off in the host cell. During assembly, acts as a chaperone protein that helps hexon proteins assembly into trimers. This is Shutoff protein from Homo sapiens (Human).